A 248-amino-acid polypeptide reads, in one-letter code: DNA repair protein RecO (248 aa).

The protein belongs to the RecO family.

Functionally, involved in DNA repair and RecF pathway recombination. The sequence is that of DNA repair protein RecO from Bacillus cytotoxicus (strain DSM 22905 / CIP 110041 / 391-98 / NVH 391-98).